Consider the following 244-residue polypeptide: Carboxy-S-adenosyl-L-methionine synthase (244 aa).

S-adenosyl-L-methionine is bound by residues Tyr41, 66 to 68, Asn134, and Arg201; that span reads GCS.

The protein belongs to the class I-like SAM-binding methyltransferase superfamily. Cx-SAM synthase family. Homodimer.

It catalyses the reaction prephenate + S-adenosyl-L-methionine = carboxy-S-adenosyl-L-methionine + 3-phenylpyruvate + H2O. Catalyzes the conversion of S-adenosyl-L-methionine (SAM) to carboxy-S-adenosyl-L-methionine (Cx-SAM). The chain is Carboxy-S-adenosyl-L-methionine synthase from Cellvibrio japonicus (strain Ueda107) (Pseudomonas fluorescens subsp. cellulosa).